The chain runs to 511 residues: 2,3-bisphosphoglycerate-independent phosphoglycerate mutase (511 aa).

2 residues coordinate Mn(2+): aspartate 14 and serine 64. Serine 64 acts as the Phosphoserine intermediate in catalysis. Substrate contacts are provided by residues histidine 125, 155–156 (RD), arginine 187, arginine 193, 259–262 (RADR), and lysine 333. Residues aspartate 400, histidine 404, aspartate 441, histidine 442, and histidine 460 each coordinate Mn(2+).

This sequence belongs to the BPG-independent phosphoglycerate mutase family. Monomer. It depends on Mn(2+) as a cofactor.

The catalysed reaction is (2R)-2-phosphoglycerate = (2R)-3-phosphoglycerate. The protein operates within carbohydrate degradation; glycolysis; pyruvate from D-glyceraldehyde 3-phosphate: step 3/5. Catalyzes the interconversion of 2-phosphoglycerate and 3-phosphoglycerate. This Idiomarina loihiensis (strain ATCC BAA-735 / DSM 15497 / L2-TR) protein is 2,3-bisphosphoglycerate-independent phosphoglycerate mutase.